We begin with the raw amino-acid sequence, 61 residues long: Large ribosomal subunit protein uL30 (61 aa).

This sequence belongs to the universal ribosomal protein uL30 family. Part of the 50S ribosomal subunit.

This Corynebacterium diphtheriae (strain ATCC 700971 / NCTC 13129 / Biotype gravis) protein is Large ribosomal subunit protein uL30.